A 167-amino-acid polypeptide reads, in one-letter code: UPF0587 protein F46B6.12 (167 aa).

4 residues coordinate Zn(2+): Cys34, Cys37, Cys68, and Cys71.

This sequence belongs to the UPF0587 family.

The protein is UPF0587 protein F46B6.12 of Caenorhabditis elegans.